The chain runs to 254 residues: Adenosine 5'-phosphosulfate reductase (254 aa).

[4Fe-4S] cluster contacts are provided by C140, C141, C223, and C226. The active-site Nucleophile; cysteine thiosulfonate intermediate is the C249.

This sequence belongs to the PAPS reductase family. CysH subfamily. The cofactor is [4Fe-4S] cluster.

The protein resides in the cytoplasm. It catalyses the reaction [thioredoxin]-disulfide + sulfite + AMP + 2 H(+) = adenosine 5'-phosphosulfate + [thioredoxin]-dithiol. It participates in sulfur metabolism; hydrogen sulfide biosynthesis; sulfite from sulfate. In terms of biological role, catalyzes the formation of sulfite from adenosine 5'-phosphosulfate (APS) using thioredoxin as an electron donor. This Mycobacterium bovis (strain ATCC BAA-935 / AF2122/97) protein is Adenosine 5'-phosphosulfate reductase.